Here is a 216-residue protein sequence, read N- to C-terminus: Probable GH family 25 lysozyme 5 (216 aa).

Positions 1 to 20 are cleaved as a signal peptide; the sequence is MRFIISLLFVFTLIFNLAFS. The 196-residue stretch at 21–216 folds into the Ch-type lysozyme domain; that stretch reads HIGIDVSSGT…GLGIDKNYWE (196 aa). The active site involves Asp-25. N-linked (GlcNAc...) asparagine glycosylation occurs at Asn-31. Catalysis depends on residues Asp-113 and Glu-115.

This sequence belongs to the glycosyl hydrolase 25 family.

It localises to the secreted. The catalysed reaction is Hydrolysis of (1-&gt;4)-beta-linkages between N-acetylmuramic acid and N-acetyl-D-glucosamine residues in a peptidoglycan and between N-acetyl-D-glucosamine residues in chitodextrins.. This Dictyostelium discoideum (Social amoeba) protein is Probable GH family 25 lysozyme 5.